We begin with the raw amino-acid sequence, 88 residues long: EMBRYO SURROUNDING FACTOR 1-like protein 11 (88 aa).

The N-terminal stretch at M1–Y23 is a signal peptide. 4 disulfide bridges follow: C44/C59, C49/C78, C57/C74, and C60/C67.

The protein belongs to the MEG family. Expressed in stems.

In Arabidopsis thaliana (Mouse-ear cress), this protein is EMBRYO SURROUNDING FACTOR 1-like protein 11 (ESFL11).